The following is a 150-amino-acid chain: UPF0506 protein SJCHGC03047 (150 aa).

The first 18 residues, 1-18, serve as a signal peptide directing secretion; the sequence is MNTCIQLLILCLVTLTNS. Asn20, Asn48, and Asn110 each carry an N-linked (GlcNAc...) asparagine glycan. Disulfide bonds link Cys116-Cys130, Cys123-Cys134, and Cys129-Cys139.

This sequence belongs to the UPF0506 family.

It is found in the secreted. This chain is UPF0506 protein SJCHGC03047, found in Schistosoma japonicum (Blood fluke).